A 263-amino-acid polypeptide reads, in one-letter code: UPF0739 protein C1orf74 homolog (263 aa).

This sequence belongs to the UPF0739 family.

This chain is UPF0739 protein C1orf74 homolog, found in Xenopus tropicalis (Western clawed frog).